Reading from the N-terminus, the 255-residue chain is Fumarate reductase cytochrome b subunit (255 aa).

A run of 5 helical transmembrane segments spans residues 33 to 53, 78 to 98, 126 to 146, 168 to 188, and 208 to 228; these read TGLI…SILI, IVSV…FLAL, WFIQ…HLFV, FWLL…IGLY, and IKWA…GAYI. 4 residues coordinate heme b: histidine 44, histidine 93, histidine 143, and histidine 182.

It belongs to the diheme cytochrome b FrdC family. Part of an enzyme complex containing three subunits: a flavoprotein (frdA), an iron-sulfur protein (frdB), and diheme cytochrome b (frdC). Heme b is required as a cofactor.

Its subcellular location is the cell inner membrane. In terms of biological role, the fumarate reductase enzyme complex is required for fumarate respiration. This subunit anchors the complex in the membrane and binds a diheme cytochrome b. The chain is Fumarate reductase cytochrome b subunit (frdC) from Helicobacter pylori (strain J99 / ATCC 700824) (Campylobacter pylori J99).